Reading from the N-terminus, the 506-residue chain is Histidine ammonia-lyase (506 aa).

The 5-imidazolinone (Ala-Gly) cross-link spans 142–144 (ASG). The residue at position 143 (serine 143) is a 2,3-didehydroalanine (Ser).

This sequence belongs to the PAL/histidase family. Post-translationally, contains an active site 4-methylidene-imidazol-5-one (MIO), which is formed autocatalytically by cyclization and dehydration of residues Ala-Ser-Gly.

It localises to the cytoplasm. It catalyses the reaction L-histidine = trans-urocanate + NH4(+). Its pathway is amino-acid degradation; L-histidine degradation into L-glutamate; N-formimidoyl-L-glutamate from L-histidine: step 1/3. The protein is Histidine ammonia-lyase of Bacillus cereus (strain B4264).